A 225-amino-acid chain; its full sequence is Uridine kinase (225 aa).

12 to 19 (GGTGAGKT) serves as a coordination point for ATP.

This sequence belongs to the uridine kinase family.

The protein localises to the cytoplasm. It catalyses the reaction uridine + ATP = UMP + ADP + H(+). The enzyme catalyses cytidine + ATP = CMP + ADP + H(+). Its pathway is pyrimidine metabolism; CTP biosynthesis via salvage pathway; CTP from cytidine: step 1/3. The protein operates within pyrimidine metabolism; UMP biosynthesis via salvage pathway; UMP from uridine: step 1/1. The protein is Uridine kinase of Halobacterium salinarum (strain ATCC 700922 / JCM 11081 / NRC-1) (Halobacterium halobium).